The following is a 508-amino-acid chain: Aspartic proteinase A3 (508 aa).

Positions 1 to 25 are cleaved as a signal peptide; sequence MGTRFQSFLLVFLLSCLILISTASC. The propeptide at 26 to 69 is activation peptide; that stretch reads ERNGDGTIRIGLKKRKLDRSNRLASQLFLKNRGSHWSPKHYFRL. Positions 87–505 constitute a Peptidase A1 domain; that stretch reads YYGDITIGTP…DYGKGRVGFA (419 aa). Asp105 is an active-site residue. 2 cysteine pairs are disulfide-bonded: Cys118/Cys124 and Cys283/Cys287. Asp292 is a catalytic residue. The 103-residue stretch at 317 to 419 folds into the Saposin B-type domain; sequence IVSRECKAVV…AELCDHIPTQ (103 aa). Intrachain disulfides connect Cys322–Cys413, Cys347–Cys385, Cys353–Cys382, and Cys427–Cys464. N-linked (GlcNAc...) asparagine glycosylation is present at Asn399.

This sequence belongs to the peptidase A1 family. In terms of tissue distribution, expressed in petals, carpels and seed pods.

It localises to the secreted. In terms of biological role, involved in the processing and degradation of storage proteins. This is Aspartic proteinase A3 (APA3) from Arabidopsis thaliana (Mouse-ear cress).